The primary structure comprises 194 residues: Peroxiredoxin 2 (194 aa).

The Thioredoxin domain occupies 2–160 (PQLQKPAPAF…TLRLVQAFQY (159 aa)). The Cysteine sulfenic acid (-SOH) intermediate role is filled by C47. Residue T193 is modified to Phosphothreonine. S194 bears the Phosphoserine mark.

It belongs to the peroxiredoxin family. AhpC/Prx1 subfamily. Homodimer; disulfide-linked, upon oxidation. 5 homodimers assemble to form a ring-like decamer. Also exists as a monomer. In terms of processing, the enzyme can be inactivated by further oxidation of the cysteine sulfenic acid (C(P)-SOH) to sulphinic acid (C(P)-SO2H) instead of its condensation to a disulfide bond. It can be reactivated by forming a transient disulfide bond with sulfiredoxin SRXN1, which reduces the cysteine sulfinic acid in an ATP- and Mg-dependent manner. Post-translationally, conjugated to URM1, a ubiquitin-like protein. As to expression, detected in the head and body (at protein level).

The protein localises to the cytoplasm. The catalysed reaction is a hydroperoxide + [thioredoxin]-dithiol = an alcohol + [thioredoxin]-disulfide + H2O. Thiol-specific peroxidase that catalyzes the reduction of hydrogen peroxide and organic hydroperoxides to water and alcohols, respectively. Plays a role in cell protection against oxidative stress by detoxifying peroxides and as sensor of hydrogen peroxide-mediated signaling events. Might participate in the signaling cascades of growth factors and tumor necrosis factor-alpha by regulating the intracellular concentrations of H(2)O(2). Reduces an intramolecular disulfide bond in GDPD5 that gates the ability to GDPD5 to drive postmitotic motor neuron differentiation. The sequence is that of Peroxiredoxin 2 from Drosophila melanogaster (Fruit fly).